The chain runs to 579 residues: Lens epithelium-derived growth factor (579 aa).

The PWWP domain occupies 1-64; sequence MSRDFKPGDL…PKDIFPYSEN (64 aa). Disordered stretches follow at residues 62 to 81, 88 to 203, 215 to 397, and 492 to 579; these read SENK…NEGL, PKVK…EEAA, AAPV…SMDS, and AEQK…FENK. Polar residues predominate over residues 94 to 107; sequence HQPSHPAVNTSIKE. The span at 153 to 173 shows a compositional bias: basic and acidic residues; it reads KEMHSTKEDEEPSEKNSKEGV. Basic residues predominate over residues 184–193; it reads VARRGRKRKA. Residues 186–196 carry the Nuclear localization signal motif; it reads RRGRKRKAEKQ. Residues 215–224 are compositionally biased toward low complexity; the sequence is AAPVTVSPKV. Positions 261 to 308 are enriched in basic and acidic residues; that stretch reads EEEKAKKKGPDEKPKKQGKKDEEGQKEEEKPKKEYDKKDGKKEAEPKR. Over residues 321 to 330 the composition is skewed to acidic residues; it reads DSEDEGGEEE. The segment covering 334–349 has biased composition (basic residues); sequence KKKGGRSFQSTHRRNI. Positions 347–442 form a coiled coil; it reads RNIMRGQHEK…SMQQAQKHTE (96 aa). Basic and acidic residues-rich tracts occupy residues 352 to 397 and 492 to 522; these read GQHE…SMDS and AEQK…KDQT. Residues 387–464 are integrase-binding domain (IBD); sequence MEKKRETSMD…VSQVIMEKST (78 aa). Over residues 530–543 the composition is skewed to polar residues; it reads GSETQDTNQSQHNG. The span at 544-579 shows a compositional bias: basic and acidic residues; the sequence is ENAEEKDKLEVASKKKTCGEESELEKPAKESAFENK.

This sequence belongs to the HDGF family.

Its subcellular location is the nucleus. In terms of biological role, transcriptional coactivator involved in neuroepithelial stem cell differentiation and neurogenesis. Involved in particular in lens epithelial cell gene regulation and stress responses. May play an important role in lens epithelial to fiber cell terminal differentiation. May play a protective role during stress-induced apoptosis. The sequence is that of Lens epithelium-derived growth factor (PSIP1) from Gallus gallus (Chicken).